The chain runs to 594 residues: SHC-transforming protein 3 (594 aa).

The tract at residues 98–147 is disordered; the sequence is GSCSAPSLAAPDGSAPSAPRAPAMSAARKGRPGDEPLPRPPRGAPHASDQ. The span at 101–124 shows a compositional bias: low complexity; the sequence is SAPSLAAPDGSAPSAPRAPAMSAA. One can recognise a PID domain in the interval 149 to 334; that stretch reads LGPGVTYVVK…LDEPWTEEEG (186 aa). The interval 335–498 is CH1; it reads DGSDHPYYNS…KMLEELQAET (164 aa). Disordered stretches follow at residues 351 to 373 and 386 to 405; these read PPGG…AQFA and GDTF…SSDI. The segment covering 393–405 has biased composition (polar residues); that stretch reads WQQTPLRQGSSDI. A Phosphoserine modification is found at S402. The SH2 domain occupies 499–590; it reads WYQGEMSRKE…GSELCLQQPV (92 aa).

As to quaternary structure, interacts with the Trk receptors in a phosphotyrosine-dependent manner. Once activated, binds to GRB2. Interacts with activated EGF receptors. In terms of processing, tyrosine phosphorylated. As to expression, mainly expressed in brain. Hardly detectable in other tissues, except in pancreas. Highly expressed in the cerebral cortex, frontal and temporal lobes, occipital pole, hippocampus, caudate nucleus and amygdala. Expressed at low level in the cerebellum, medulla and spinal cord.

Its function is as follows. Signaling adapter that couples activated growth factor receptors to signaling pathway in neurons. Involved in the signal transduction pathways of neurotrophin-activated Trk receptors in cortical neurons. The polypeptide is SHC-transforming protein 3 (SHC3) (Homo sapiens (Human)).